Consider the following 90-residue polypeptide: Small ribosomal subunit protein bS20 (90 aa).

The span at 1-10 (MANHKSTQKS) shows a compositional bias: polar residues. A disordered region spans residues 1–25 (MANHKSTQKSIRQDQKRNLINKSRK).

The protein belongs to the bacterial ribosomal protein bS20 family.

In terms of biological role, binds directly to 16S ribosomal RNA. The chain is Small ribosomal subunit protein bS20 from Orientia tsutsugamushi (strain Boryong) (Rickettsia tsutsugamushi).